The chain runs to 120 residues: Small ribosomal subunit protein eS17 (120 aa).

This sequence belongs to the eukaryotic ribosomal protein eS17 family. Component of the small ribosomal subunit.

Its subcellular location is the cytoplasm. The protein is Small ribosomal subunit protein eS17 (RPS17) of Encephalitozoon cuniculi (strain GB-M1) (Microsporidian parasite).